We begin with the raw amino-acid sequence, 202 residues long: Outer-membrane lipoprotein carrier protein (202 aa).

An N-terminal signal peptide occupies residues 1-18 (MNKLFLILLLIFSHEVFS).

It belongs to the LolA family. Monomer.

It is found in the periplasm. In terms of biological role, participates in the translocation of lipoproteins from the inner membrane to the outer membrane. Only forms a complex with a lipoprotein if the residue after the N-terminal Cys is not an aspartate (The Asp acts as a targeting signal to indicate that the lipoprotein should stay in the inner membrane). The sequence is that of Outer-membrane lipoprotein carrier protein from Legionella pneumophila (strain Corby).